The sequence spans 629 residues: Citrate (Re)-synthase (629 aa).

The region spanning I59–T329 is the Pyruvate carboxyltransferase domain. The Cache domain occupies V497 to V601.

Belongs to the alpha-IPM synthase/homocitrate synthase family. Homotetramer. Requires Co(2+) as cofactor. The cofactor is Mn(2+).

It catalyses the reaction oxaloacetate + acetyl-CoA + H2O = citrate + CoA + H(+). Inhibited by p-hydroxymercuribenzoate and EDTA. Its function is as follows. Catalyzes the condensation of the acetyl group of acetyl-CoA with oxaloacetate to form citrate. The protein is Citrate (Re)-synthase of Syntrophus aciditrophicus (strain SB).